The primary structure comprises 418 residues: NADH-quinone oxidoreductase subunit D (418 aa).

Belongs to the complex I 49 kDa subunit family. As to quaternary structure, NDH-1 is composed of 14 different subunits. Subunits NuoB, C, D, E, F, and G constitute the peripheral sector of the complex.

The protein resides in the cell inner membrane. The enzyme catalyses a quinone + NADH + 5 H(+)(in) = a quinol + NAD(+) + 4 H(+)(out). Functionally, NDH-1 shuttles electrons from NADH, via FMN and iron-sulfur (Fe-S) centers, to quinones in the respiratory chain. The immediate electron acceptor for the enzyme in this species is believed to be ubiquinone. Couples the redox reaction to proton translocation (for every two electrons transferred, four hydrogen ions are translocated across the cytoplasmic membrane), and thus conserves the redox energy in a proton gradient. This is NADH-quinone oxidoreductase subunit D from Bordetella avium (strain 197N).